Consider the following 297-residue polypeptide: tRNA dimethylallyltransferase (297 aa).

Residue 15-22 participates in ATP binding; sequence GPTASGKS. Residue 17–22 participates in substrate binding; that stretch reads TASGKS. 2 interaction with substrate tRNA regions span residues 40–43 and 164–168; these read DSMQ and QRIVR.

This sequence belongs to the IPP transferase family. Monomer. Mg(2+) is required as a cofactor.

It catalyses the reaction adenosine(37) in tRNA + dimethylallyl diphosphate = N(6)-dimethylallyladenosine(37) in tRNA + diphosphate. Catalyzes the transfer of a dimethylallyl group onto the adenine at position 37 in tRNAs that read codons beginning with uridine, leading to the formation of N6-(dimethylallyl)adenosine (i(6)A). In Rhizobium etli (strain CIAT 652), this protein is tRNA dimethylallyltransferase.